Consider the following 91-residue polypeptide: Small ribosomal subunit protein bS18 (91 aa).

This sequence belongs to the bacterial ribosomal protein bS18 family. Part of the 30S ribosomal subunit. Forms a tight heterodimer with protein bS6.

In terms of biological role, binds as a heterodimer with protein bS6 to the central domain of the 16S rRNA, where it helps stabilize the platform of the 30S subunit. In Syntrophotalea carbinolica (strain DSM 2380 / NBRC 103641 / GraBd1) (Pelobacter carbinolicus), this protein is Small ribosomal subunit protein bS18.